A 788-amino-acid chain; its full sequence is Autophagy-related protein 9 (788 aa).

Residues 1 to 171 (MTDKSTFLSV…EAYMYYTGKG (171 aa)) lie on the Cytoplasmic side of the membrane. Residues 32-42 (ILRRVEEEHAQ) are compositionally biased toward basic and acidic residues. The disordered stretch occupies residues 32-127 (ILRRVEEEHA…TGVANGGLPR (96 aa)). The span at 44 to 58 (SDNSNSDNDSGNDSD) shows a compositional bias: low complexity. The segment covering 101–112 (SFAQGTKTQTPI) has biased composition (polar residues). Residues 172 to 192 (LVSIILSRVLNMSTIMFVVVF) traverse the membrane as a helical segment. Topologically, residues 193–222 (STYLGSCIDYSKIKGSRTLDEVHVKQCYAK) are lumenal. The chain crosses the membrane as a helical span at residues 223 to 243 (LGSFHVFVLWTFFVLWFMKLF). The Cytoplasmic portion of the chain corresponds to 244–390 (QYVKDIRRLV…QILSTGLRRR (147 aa)). Residue phenylalanine 391 is an intramembrane region. The Cytoplasmic segment spans residues 392-479 (VFAAIMNVVF…PKEKTALVSK (88 aa)). A helical transmembrane segment spans residues 480–500 (FVSFIAGSFAAVLGIASLIDP). The Lumenal segment spans residues 501-512 (ELFLMFEISANR). The chain crosses the membrane as a helical span at residues 513–533 (TVLFYIGVFGSILAVSRSLIP). Residues 534 to 579 (EETLVFDPEISLRYVAEFTHYLPPEWEGKLHTEQVKNEFSLMYEMR) are Cytoplasmic-facing. Residues 580 to 600 (LIILLKELASIFLAPFILYYS) lie within the membrane without spanning it. Residues 601 to 788 (LTQSCDDIVD…KKTDNMNLGA (188 aa)) lie on the Cytoplasmic side of the membrane. The interval 715–736 (LSPAAPTATTATSGTATGAAPR) is disordered. The segment covering 716–734 (SPAAPTATTATSGTATGAA) has biased composition (low complexity).

This sequence belongs to the ATG9 family. As to quaternary structure, homotrimer; forms a homotrimer with a central pore that forms a path between the two membrane leaflets. Phosphorylated by ATG1. ATG1 phosphorylation is required for preautophagosome elongation.

The protein resides in the preautophagosomal structure membrane. It localises to the cytoplasmic vesicle membrane. The protein localises to the golgi apparatus membrane. It is found in the endoplasmic reticulum membrane. It catalyses the reaction a 1,2-diacyl-sn-glycero-3-phosphocholine(in) = a 1,2-diacyl-sn-glycero-3-phosphocholine(out). It carries out the reaction a 1,2-diacyl-sn-glycero-3-phospho-L-serine(in) = a 1,2-diacyl-sn-glycero-3-phospho-L-serine(out). The catalysed reaction is a 1,2-diacyl-sn-glycero-3-phosphoethanolamine(in) = a 1,2-diacyl-sn-glycero-3-phosphoethanolamine(out). The enzyme catalyses a 1,2-diacyl-sn-glycero-3-phospho-(1D-myo-inositol-3-phosphate)(in) = a 1,2-diacyl-sn-glycero-3-phospho-(1D-myo-inositol-3-phosphate)(out). In terms of biological role, phospholipid scramblase involved in autophagy and cytoplasm to vacuole transport (Cvt) vesicle formation. Cycles between the preautophagosomal structure/phagophore assembly site (PAS) and the cytoplasmic vesicle pool and supplies membrane for the growing autophagosome. Lipid scramblase activity plays a key role in preautophagosomal structure/phagophore assembly by distributing the phospholipids that arrive through ATG2 from the cytoplasmic to the luminal leaflet of the bilayer, thereby driving autophagosomal membrane expansion. Required for mitophagy. Also involved in endoplasmic reticulum-specific autophagic process and is essential for the survival of cells subjected to severe ER stress. Different machineries are required for anterograde trafficking to the PAS during either the Cvt pathway or bulk autophagy and for retrograde trafficking. The chain is Autophagy-related protein 9 from Yarrowia lipolytica (strain CLIB 122 / E 150) (Yeast).